The primary structure comprises 173 residues: Alpha-crystallin A chain (173 aa).

M1 is subject to N-acetylmethionine. The required for complex formation with BFSP1 and BFSP2 stretch occupies residues 1–63; sequence MDIAIQHPWF…RTVLDSGISE (63 aa). Q6 carries the deamidated glutamine; partial modification. S45 carries the post-translational modification Phosphoserine. Q50 is modified (deamidated glutamine; partial). The 111-residue stretch at 52 to 162 folds into the sHSP domain; the sequence is LFRTVLDSGI…GHSERAIPVS (111 aa). K70 carries the post-translational modification N6-acetyllysine. The residue at position 90 (Q90) is a Deamidated glutamine; partial. K99 carries the N6-acetyllysine modification. H100 contacts Zn(2+). N101 carries the deamidated asparagine; partial modification. Positions 102 and 107 each coordinate Zn(2+). S122 bears the Phosphoserine mark. N123 is subject to Deamidated asparagine; partial. Residues 144–173 are disordered; the sequence is PKVPSGMDAGHSERAIPVSREEKPSSAPSS. Residues 153-167 show a composition bias toward basic and acidic residues; the sequence is GHSERAIPVSREEKP. H154 provides a ligand contact to Zn(2+). S162 carries an O-linked (GlcNAc) serine glycan.

This sequence belongs to the small heat shock protein (HSP20) family. In terms of assembly, heteromer composed of three CRYAA and one CRYAB subunits. Inter-subunit bridging via zinc ions enhances stability, which is crucial as there is no protein turn over in the lens. Can also form homodimers and homotetramers (dimers of dimers) which serve as the building blocks of homooligomers. Within homooligomers, the zinc-binding motif is created from residues of 3 different molecules. His-100 and Glu-102 from one molecule are ligands of the zinc ion, and His-107 and His-154 residues from additional molecules complete the site with tetrahedral coordination geometry. Part of a complex required for lens intermediate filament formation composed of BFSP1, BFSP2 and CRYAA. In terms of processing, acetylation at Lys-70 may increase chaperone activity. Undergoes age-dependent proteolytical cleavage at the C-terminus.

The protein localises to the cytoplasm. The protein resides in the nucleus. Functionally, contributes to the transparency and refractive index of the lens. Acts as a chaperone, preventing aggregation of various proteins under a wide range of stress conditions. Required for the correct formation of lens intermediate filaments as part of a complex composed of BFSP1, BFSP2 and CRYAA. The polypeptide is Alpha-crystallin A chain (CRYAA) (Balaenoptera acutorostrata (Common minke whale)).